The primary structure comprises 4241 residues: Intermembrane lipid transfer protein vps13E (4241 aa).

Positions 5–97 (ILPGLLKKIL…GPKDIINTFS (93 aa)) constitute a Chorein N-terminal domain. Over residues 120–140 (IDSNSNNNNKKNAPSSSSSND) the composition is skewed to low complexity. Disordered stretches follow at residues 120–143 (IDSNSNNNNKKNAPSSSSSNDDFF), 234–340 (LSKN…QQQQ), 942–986 (LGTG…VEKE), 1220–1256 (NNNNNNNNNNNNNNNNNNNNNRNLNNNNNNNNNNQKP), 1345–1369 (TTTTTSPRYHHQNHHNHQHKKQNRH), 1534–1571 (KPSSKDNNNNNNNNNNSDSDSDSDTDSSSSSENNYNNN), 2148–2192 (QQQQ…PNVH), and 2217–2282 (VTEK…NNIN). The segment covering 234 to 254 (LSKNTSTHQQQQPTFNPYVGS) has biased composition (polar residues). Positions 255–264 (QQQQQQQPQQ) are enriched in low complexity. Over residues 279-289 (FMNNKNSDEGI) the composition is skewed to polar residues. Low complexity-rich tracts occupy residues 290 to 313 (SSSSSSSSFNNNNLNIPTLNLNDN), 325 to 340 (QPTPKSEQYQQQQQQQ), and 942 to 952 (LGTGNGINNNN). The span at 968–986 (DDGKYPEQDDLDDSKVEKE) shows a compositional bias: basic and acidic residues. Residues 1220-1253 (NNNNNNNNNNNNNNNNNNNNNRNLNNNNNNNNNN) show a composition bias toward low complexity. Over residues 1352 to 1369 (RYHHQNHHNHQHKKQNRH) the composition is skewed to basic residues. Low complexity-rich tracts occupy residues 1538–1551 (KDNNNNNNNNNNSD), 1559–1571 (DSSSSSENNYNNN), and 2148–2177 (QQQQQQQQQNNNNNQNNQASSNNNNNNNNN). Residues 2178–2188 (VSGNTINNKSV) show a composition bias toward polar residues. Acidic residues predominate over residues 2246–2259 (SDDDDDEGEDEDIG). Residues 2265–2282 (DHSTSSAPTSRSNYNNIN) are compositionally biased toward polar residues. Residues 2825 to 3134 (KIVFYNQYWI…IPYVWDLPLE (310 aa)) enclose the SHR-BD domain. Disordered regions lie at residues 3973 to 4000 (PTTTTTTNTTTTPYQSSQNIHSTPYPTE), 4059 to 4094 (YQHSGSGAPPPPPIITTTTNSTIPPPSSNINQRQLQ), and 4109 to 4140 (KSMARQQQFQQPPPPPPLPSNNRLSLTPSGSG). Residues 3974 to 3984 (TTTTTTNTTTT) show a composition bias toward low complexity. A compositionally biased stretch (polar residues) spans 3985–4000 (PYQSSQNIHSTPYPTE). The span at 4128–4140 (SNNRLSLTPSGSG) shows a compositional bias: polar residues.

This sequence belongs to the VPS13 family.

The protein resides in the membrane. Its function is as follows. Mediates the transfer of lipids between membranes at organelle contact sites. The sequence is that of Intermembrane lipid transfer protein vps13E (vps13E) from Dictyostelium discoideum (Social amoeba).